The chain runs to 468 residues: Glutamyl-tRNA reductase (468 aa).

Residues 49 to 52 (TCNR), Ser-109, 114 to 116 (EQQ), and Gln-120 each bind substrate. The active-site Nucleophile is the Cys-50. Residue 189 to 194 (GAGAMG) coordinates NADP(+). The tract at residues 443–468 (VPSGFDAESRRGGGDMQSSPKRSPSN) is disordered. The segment covering 458–468 (MQSSPKRSPSN) has biased composition (polar residues).

Belongs to the glutamyl-tRNA reductase family. As to quaternary structure, homodimer.

The catalysed reaction is (S)-4-amino-5-oxopentanoate + tRNA(Glu) + NADP(+) = L-glutamyl-tRNA(Glu) + NADPH + H(+). Its pathway is porphyrin-containing compound metabolism; protoporphyrin-IX biosynthesis; 5-aminolevulinate from L-glutamyl-tRNA(Glu): step 1/2. Functionally, catalyzes the NADPH-dependent reduction of glutamyl-tRNA(Glu) to glutamate 1-semialdehyde (GSA). The protein is Glutamyl-tRNA reductase of Mycobacterium tuberculosis (strain ATCC 25177 / H37Ra).